Here is a 271-residue protein sequence, read N- to C-terminus: MKICIVSRIDLKEPVELAQSLGWMLRDQGHDVVYEQSVAAELGYAPVSLSKDFSADLIVVLGGDGSVLRTIRMLDHQVPVVGINQGQVGFLTDIERDKAEEILTSLSLPLPLDPRMRISIEFNGRSVGSALNEAVIVTSRPAKILKFAVFVNGRQIDEFRADGLIIGTPTGSTAYAMSAGGPIVDSTIEAMLLVPLAPYMLSSRPYLINSNSEVEIRLVSVKPALLVIDGQDQYEIGENATLLIRKSPDPALFVDVGRGFFDKVEQKLRLL.

Asp-64 acts as the Proton acceptor in catalysis. Residues 64–65 (DG), Arg-69, 132–133 (NE), Lys-143, Arg-160, Asp-162, 173–178 (TAYAMS), Ala-197, and Gln-231 contribute to the NAD(+) site.

It belongs to the NAD kinase family. A divalent metal cation serves as cofactor.

Its subcellular location is the cytoplasm. The enzyme catalyses NAD(+) + ATP = ADP + NADP(+) + H(+). In terms of biological role, involved in the regulation of the intracellular balance of NAD and NADP, and is a key enzyme in the biosynthesis of NADP. Catalyzes specifically the phosphorylation on 2'-hydroxyl of the adenosine moiety of NAD to yield NADP. This is NAD kinase from Methanocorpusculum labreanum (strain ATCC 43576 / DSM 4855 / Z).